A 448-amino-acid polypeptide reads, in one-letter code: 3-phosphoshikimate 1-carboxyvinyltransferase (448 aa).

Residues lysine 38, serine 39, and arginine 43 each coordinate 3-phosphoshikimate. Residue lysine 38 participates in phosphoenolpyruvate binding. 2 residues coordinate phosphoenolpyruvate: glycine 111 and arginine 140. 4 residues coordinate 3-phosphoshikimate: serine 185, glutamine 187, aspartate 335, and lysine 362. Glutamine 187 is a binding site for phosphoenolpyruvate. The active-site Proton acceptor is the aspartate 335. 2 residues coordinate phosphoenolpyruvate: arginine 366 and arginine 408.

The protein belongs to the EPSP synthase family. In terms of assembly, monomer.

Its subcellular location is the cytoplasm. The catalysed reaction is 3-phosphoshikimate + phosphoenolpyruvate = 5-O-(1-carboxyvinyl)-3-phosphoshikimate + phosphate. Its pathway is metabolic intermediate biosynthesis; chorismate biosynthesis; chorismate from D-erythrose 4-phosphate and phosphoenolpyruvate: step 6/7. In terms of biological role, catalyzes the transfer of the enolpyruvyl moiety of phosphoenolpyruvate (PEP) to the 5-hydroxyl of shikimate-3-phosphate (S3P) to produce enolpyruvyl shikimate-3-phosphate and inorganic phosphate. The chain is 3-phosphoshikimate 1-carboxyvinyltransferase from Synechococcus elongatus (strain ATCC 33912 / PCC 7942 / FACHB-805) (Anacystis nidulans R2).